The primary structure comprises 109 residues: MQRTRLNTIVEVRGQQLSQFFRNPWRRISLSLLSFLFGFFVGTAVATTAGQNSQWDVVCAAFILLFCELVNRWFYRRGVKMGDLQAEVLNIFKMGVSYSLFLEAFKLGS.

This sequence belongs to the ycf20 family.

In Synechocystis sp. (strain ATCC 27184 / PCC 6803 / Kazusa), this protein is Ycf20-like protein.